The following is a 479-amino-acid chain: 3-isopropylmalate dehydratase large subunit (479 aa).

[4Fe-4S] cluster is bound by residues C350, C415, and C418.

This sequence belongs to the aconitase/IPM isomerase family. LeuC type 1 subfamily. As to quaternary structure, heterodimer of LeuC and LeuD. Requires [4Fe-4S] cluster as cofactor.

The catalysed reaction is (2R,3S)-3-isopropylmalate = (2S)-2-isopropylmalate. It functions in the pathway amino-acid biosynthesis; L-leucine biosynthesis; L-leucine from 3-methyl-2-oxobutanoate: step 2/4. Functionally, catalyzes the isomerization between 2-isopropylmalate and 3-isopropylmalate, via the formation of 2-isopropylmaleate. The sequence is that of 3-isopropylmalate dehydratase large subunit from Caulobacter vibrioides (strain ATCC 19089 / CIP 103742 / CB 15) (Caulobacter crescentus).